The chain runs to 629 residues: tRNA uridine 5-carboxymethylaminomethyl modification enzyme MnmG (629 aa).

Position 13–18 (13–18) interacts with FAD; sequence GGGHAG. 273–287 provides a ligand contact to NAD(+); sequence GPRYCPSIEDKIHRF.

It belongs to the MnmG family. In terms of assembly, homodimer. Heterotetramer of two MnmE and two MnmG subunits. FAD serves as cofactor.

It is found in the cytoplasm. NAD-binding protein involved in the addition of a carboxymethylaminomethyl (cmnm) group at the wobble position (U34) of certain tRNAs, forming tRNA-cmnm(5)s(2)U34. This chain is tRNA uridine 5-carboxymethylaminomethyl modification enzyme MnmG, found in Shewanella denitrificans (strain OS217 / ATCC BAA-1090 / DSM 15013).